The sequence spans 296 residues: Cytidine deaminase (296 aa).

CMP/dCMP-type deaminase domains lie at 47-167 (TEAE…FGPK) and 186-296 (DSAD…IDPV). 88–90 (NLE) is a binding site for substrate. Residue H101 coordinates Zn(2+). The Proton donor role is filled by E103. Residues C128 and C131 each coordinate Zn(2+).

It belongs to the cytidine and deoxycytidylate deaminase family. In terms of assembly, homodimer. Requires Zn(2+) as cofactor.

The enzyme catalyses cytidine + H2O + H(+) = uridine + NH4(+). It catalyses the reaction 2'-deoxycytidine + H2O + H(+) = 2'-deoxyuridine + NH4(+). In terms of biological role, this enzyme scavenges exogenous and endogenous cytidine and 2'-deoxycytidine for UMP synthesis. This Shewanella baltica (strain OS155 / ATCC BAA-1091) protein is Cytidine deaminase.